Reading from the N-terminus, the 358-residue chain is Branched-chain amino acid aminotransferase gloG (358 aa).

Position 91 (R91) interacts with pyridoxal 5'-phosphate. K195 acts as the Proton acceptor in catalysis. Position 195 is an N6-(pyridoxal phosphate)lysine (K195). Residue E231 participates in pyridoxal 5'-phosphate binding.

This sequence belongs to the class-IV pyridoxal-phosphate-dependent aminotransferase family. Requires pyridoxal 5'-phosphate as cofactor.

The enzyme catalyses L-isoleucine + 2-oxoglutarate = (S)-3-methyl-2-oxopentanoate + L-glutamate. The catalysed reaction is L-leucine + 2-oxoglutarate = 4-methyl-2-oxopentanoate + L-glutamate. It catalyses the reaction L-valine + 2-oxoglutarate = 3-methyl-2-oxobutanoate + L-glutamate. It functions in the pathway mycotoxin biosynthesis. In terms of biological role, branched-chain amino acid aminotransferase; part of the gene cluster that mediates the biosynthesis of pneumocandins, lipohexapeptides of the echinocandin family that prevent fungal cell wall formation by non-competitive inhibition of beta-1,3-glucan synthase. The 10,12-dimethylmyristoyl side chain is synthesized by the reducing polyketide synthase gloL/GLPKS4. The thioesterase gloN/GLHYD exclusively interacts with gloL/GLPKS4 to maintain turnover of the polyketide side chain. The 10R,12S-dimethylmyristic acid is then transferred to the first thiolation domain of the nonribosomal peptide synthetase gloA/GLNRPS4 by the acyl-AMP ligase gloD/GLligase, followed by its acylation to L-ornithine to trigger elongation of the cyclic hexapeptide. L-ornithine, 4R-hydroxyl-L-proline (generated from L-proline by the dioxygenase gloF/GLOXY2), 3S-hydroxyl-L-homotyrosine (generated by gloG/GLHtyB, gloH/GLHtyA, gloI/GLHtyC, gloJ/GLHtyD and hydroxylated at C-3 by the dioxygenase gloM/GLOXY1), 3R-hydroxyl-L-glutamine (generated from L-glutamine probably by the dioxygenase gloE/GLOXY3) and 3S-hydroxyl-L-proline (generated from L-proline by the dioxygenase gloF/GLOXY2 to yield pneumocandin B0), or 3S-hydroxyl-4S-methyl-L-proline (generated from L-leucine by the dioxygenase gloC/GLOXY4 to yield pneumocandin A0) are sequentially added to the growing chain. The last C domain of gloA/GLNRPS4 is proposed to be responsible for cyclization by condensation to form the peptide bond between L-ornithine and 3S-hydroxyl-4S-methyl-L-proline (for pneumocandin A0) or 3S-hydroxyl-L-proline (for pneumocandin B0). Finally, the subsequent C-4 hydroxylation of 3S-hydroxyl-L-homotyrosine and L-ornithine dihydroxylation at C-4 and C-5 are performed by the cytochrome P450 monooxygenases gloP/GLP450-1 and gloO/GLP450-2, respectively. The chain is Branched-chain amino acid aminotransferase gloG from Glarea lozoyensis (strain ATCC 20868 / MF5171).